Reading from the N-terminus, the 326-residue chain is tRNA N6-adenosine threonylcarbamoyltransferase (326 aa).

2 residues coordinate Fe cation: His111 and His115. Substrate contacts are provided by residues 134–138 (TVSGG), Asp167, Gly180, Asp184, and Asn268. Fe cation is bound at residue Asp293.

It belongs to the KAE1 / TsaD family. The cofactor is Fe(2+).

The protein resides in the cytoplasm. It catalyses the reaction L-threonylcarbamoyladenylate + adenosine(37) in tRNA = N(6)-L-threonylcarbamoyladenosine(37) in tRNA + AMP + H(+). Required for the formation of a threonylcarbamoyl group on adenosine at position 37 (t(6)A37) in tRNAs that read codons beginning with adenine. Is involved in the transfer of the threonylcarbamoyl moiety of threonylcarbamoyl-AMP (TC-AMP) to the N6 group of A37, together with TsaE and TsaB. TsaD likely plays a direct catalytic role in this reaction. The polypeptide is tRNA N6-adenosine threonylcarbamoyltransferase (Dehalococcoides mccartyi (strain ATCC BAA-2100 / JCM 16839 / KCTC 5957 / BAV1)).